A 304-amino-acid chain; its full sequence is Small glutamine-rich tetratricopeptide repeat-containing protein beta (304 aa).

TPR repeat units lie at residues L15–D49, A85–N118, V120–Y152, and S153–N186. At K131 the chain carries N6-acetyllysine. Phosphoserine occurs at positions 293, 295, and 297.

Belongs to the SGT family. In terms of assembly, homooligomerize.

Functionally, co-chaperone that binds directly to HSC70 and HSP70 and regulates their ATPase activity. In Mus musculus (Mouse), this protein is Small glutamine-rich tetratricopeptide repeat-containing protein beta (Sgtb).